The chain runs to 456 residues: General transcription factor IIE subunit 1 (456 aa).

The HTH TFE/IIEalpha-type domain maps to 11-100; that stretch reads LDDLVKMVIR…LWYIDYKHII (90 aa). The C4-type zinc finger occupies 129–157; that stretch reads CQTCHKVYTALDIPKLLNMDTGALACEIC. Residues 345-402 form a disordered region; the sequence is ESAPDSGDADGNGSNSGSGGSTIEGNDGGNGEHQNKKMKLDDSQTVSSMSQSDDDGKD. The segment covering 347 to 357 has biased composition (low complexity); that stretch reads APDSGDADGNG. A compositionally biased stretch (gly residues) spans 358–375; it reads SNSGSGGSTIEGNDGGNG. Over residues 377 to 386 the composition is skewed to basic and acidic residues; that stretch reads HQNKKMKLDD.

This sequence belongs to the TFIIE alpha subunit family. In terms of assembly, TFIIE is a tetramer of two alpha and two beta subunits.

The protein resides in the nucleus. Recruits TFIIH to the initiation complex and stimulates the RNA polymerase II C-terminal domain kinase and DNA-dependent ATPase activities of TFIIH. Both TFIIH and TFIIE are required for promoter clearance by RNA polymerase. The chain is General transcription factor IIE subunit 1 (gtf2e1-1) from Dictyostelium discoideum (Social amoeba).